A 975-amino-acid chain; its full sequence is FHF complex subunit HOOK-interacting protein 1B (975 aa).

The disordered stretch occupies residues 465 to 496; the sequence is APSPPRPEHASWARGPGSPSVDSSSVVTVPRP. At Ser-467 the chain carries Phosphoserine. Over residues 482–496 the composition is skewed to low complexity; that stretch reads SPSVDSSSVVTVPRP. Residues Ser-510, Ser-523, Ser-529, and Ser-533 each carry the phosphoserine modification. Disordered regions lie at residues 511–548, 573–621, and 690–717; these read LGGSESPGPVPRSPGLTASPTSSPSRRPSPAEEPGELE, SAPY…GLAV, and SNGGAGSEPPLEPPLPPEEEEAYESFTC. Positions 527–538 are enriched in low complexity; it reads TASPTSSPSRRP. Over residues 597–608 the composition is skewed to basic and acidic residues; the sequence is LLPEEDRDNVRE. The residue at position 863 (Ser-863) is a Phosphoserine. Thr-892 carries the phosphothreonine modification. At Ser-900 the chain carries Phosphoserine.

The protein belongs to the FHIP family. In terms of assembly, component of the FTS/Hook/FHIP complex (FHF complex), composed of AKTIP/FTS, FHIP1B, and one or more members of the Hook family of proteins HOOK1, HOOK2, and HOOK3. The FHF complex associates with the homotypic vesicular sorting complex (the HOPS complex).

Its function is as follows. Component of the FTS/Hook/FHIP complex (FHF complex). The FHF complex may function to promote vesicle trafficking and/or fusion via the homotypic vesicular protein sorting complex (the HOPS complex). FHF complex promotes the distribution of AP-4 complex to the perinuclear area of the cell. The protein is FHF complex subunit HOOK-interacting protein 1B of Mus musculus (Mouse).